We begin with the raw amino-acid sequence, 184 residues long: Putative manganese efflux pump MntP (184 aa).

The next 6 membrane-spanning stretches (helical) occupy residues 5 to 25 (LISIIIIAIALAMDAFSVSLT), 38 to 58 (ILYYGLFFGFFQFIMPVIGYI), 67 to 87 (VSTVAPWIAFFLLLAIGLNMI), 107 to 127 (LTLLAVATSIDAFAVGITFAL), 133 to 153 (LLPCTIIGIVAFIFSISGIFI), and 164 to 184 (KFEILGGAVLILIGIKILLGY).

The protein belongs to the MntP (TC 9.B.29) family.

It localises to the cell membrane. Its function is as follows. Probably functions as a manganese efflux pump. This chain is Putative manganese efflux pump MntP, found in Methanobrevibacter smithii (strain ATCC 35061 / DSM 861 / OCM 144 / PS).